The chain runs to 370 residues: uncharacterized protein (370 aa).

Met-1 carries the N-acetylmethionine modification.

It belongs to the ornithine cyclodeaminase/mu-crystallin family.

This is an uncharacterized protein from Saccharomyces cerevisiae (strain ATCC 204508 / S288c) (Baker's yeast).